We begin with the raw amino-acid sequence, 61 residues long: Large ribosomal subunit protein bL28 (61 aa).

The protein belongs to the bacterial ribosomal protein bL28 family.

This is Large ribosomal subunit protein bL28 from Geobacillus sp. (strain WCH70).